We begin with the raw amino-acid sequence, 143 residues long: D-aminoacyl-tRNA deacylase (143 aa).

The Gly-cisPro motif, important for rejection of L-amino acids motif lies at 135 to 136; that stretch reads GP.

The protein belongs to the DTD family. In terms of assembly, homodimer.

Its subcellular location is the cytoplasm. It catalyses the reaction glycyl-tRNA(Ala) + H2O = tRNA(Ala) + glycine + H(+). The enzyme catalyses a D-aminoacyl-tRNA + H2O = a tRNA + a D-alpha-amino acid + H(+). Its function is as follows. An aminoacyl-tRNA editing enzyme that deacylates mischarged D-aminoacyl-tRNAs. Also deacylates mischarged glycyl-tRNA(Ala), protecting cells against glycine mischarging by AlaRS. Acts via tRNA-based rather than protein-based catalysis; rejects L-amino acids rather than detecting D-amino acids in the active site. By recycling D-aminoacyl-tRNA to D-amino acids and free tRNA molecules, this enzyme counteracts the toxicity associated with the formation of D-aminoacyl-tRNA entities in vivo and helps enforce protein L-homochirality. This chain is D-aminoacyl-tRNA deacylase, found in Mycobacterium bovis (strain BCG / Pasteur 1173P2).